Consider the following 533-residue polypeptide: DnaJ homolog subfamily C member 21 (533 aa).

The region spanning 3 to 70 is the J domain; the sequence is CHYEALGVRR…ERAWYDNHRE (68 aa). 3 disordered regions span residues 278–311, 327–473, and 503–533; these read QFGD…AELY, KAMR…RVPA, and KATG…RKNR. Phosphoserine occurs at positions 283 and 302. The span at 291-302 shows a compositional bias: basic and acidic residues; that stretch reads QELRDGQDGKDS. The segment at 315-339 adopts a C2H2-type 1 zinc-finger fold; it reads YCPACDKSFKTEKAMRNHEKSKKHR. A compositionally biased stretch (polar residues) spans 357-369; it reads SGPQTDENSLNAN. Ser-370 bears the Phosphoserine mark. Positions 381–392 are enriched in basic residues; it reads KLSRKQKKKKQK. The span at 393–403 shows a compositional bias: polar residues; that stretch reads PAQNYDDNFNE. Over residues 455 to 464 the composition is skewed to basic residues; that stretch reads SKPKGKKAKD. The C2H2-type 2 zinc-finger motif lies at 484–508; the sequence is SCTTCHSEFPSRNKLFDHLKATGHA. Ser-512 bears the Phosphoserine mark. Positions 512–523 are enriched in low complexity; the sequence is SSSTSLNSVTNS. Residues 524–533 show a composition bias toward basic residues; that stretch reads RNKKEKRKNR.

Interacts with HSPA8, PA2G4 and ZNF622.

Its subcellular location is the cytoplasm. It is found in the nucleus. The protein localises to the nucleolus. Functionally, may act as a co-chaperone for HSP70. May play a role in ribosomal RNA (rRNA) biogenesis, possibly in the maturation of the 60S subunit. Binds the precursor 45S rRNA. This is DnaJ homolog subfamily C member 21 (DNAJC21) from Bos taurus (Bovine).